Reading from the N-terminus, the 360-residue chain is Histidinol-phosphate aminotransferase (360 aa).

Position 223 is an N6-(pyridoxal phosphate)lysine (Lys-223).

It belongs to the class-II pyridoxal-phosphate-dependent aminotransferase family. Histidinol-phosphate aminotransferase subfamily. As to quaternary structure, homodimer. The cofactor is pyridoxal 5'-phosphate.

The enzyme catalyses L-histidinol phosphate + 2-oxoglutarate = 3-(imidazol-4-yl)-2-oxopropyl phosphate + L-glutamate. Its pathway is amino-acid biosynthesis; L-histidine biosynthesis; L-histidine from 5-phospho-alpha-D-ribose 1-diphosphate: step 7/9. The polypeptide is Histidinol-phosphate aminotransferase (hisC) (Bacillus subtilis (strain 168)).